Here is a 548-residue protein sequence, read N- to C-terminus: MNFKSTVITAMCCFFSFAVLASEKLEKPKLVVGLVVDQMRWDYLYRYYDRYSENGFKRLLNEGFSSENTLIDYVPTYTAIGHSTIYTGSVPAINGIAGNDFIIQATGQNMYCTQDDSVQAVGGEGKVGQQSPKNLLVSTITDQLKLATNFQSKVIGIAIKDRGGILPAGHFANAAYWLDGKTGDWITSTYYMKDLPKWVKGFNKEKVVDQYYKQGWKTLYPIDTYVLSTADDNLYEETFKGEKTPTFPRDLVKLKKENGYELIKSTPQGNTLTLDFAKRAIENEQLGNNPLQVTDFLAVSLSSTDYIGHQFAINSIEIEDTYLRLDRDIADFLAYLDQNIGKGNYTLFLSADHGAAHNPKFFADQKGNSGYFDTKAIRKDLNEKLASKFGVADLVKSLANYQVHLNYEVIEANDVEEDEVIAAAIKLLKKVDGVAFVVDMNEAAESSVPQILRERIINGYNFKRSGAIQLILEPQWFSGSKDGKGTTHGSWNSYDAHIPAVFLGWGVKPGKTTRQTHMTDIAPTIAQILKIEFPNGNIGTPIQEAIEQ.

Positions 1–21 (MNFKSTVITAMCCFFSFAVLA) are cleaved as a signal peptide. The a divalent metal cation site is built by Asp-37 and Thr-78. Thr-78 serves as the catalytic Phosphothreonine intermediate. Residues Asn-99 and 160 to 162 (KDR) each bind substrate. An ATP-binding motif is present at residues 179–187 (DGKTGDWIT). A divalent metal cation contacts are provided by Asp-305, His-309, Asp-352, His-353, and His-488.

The cofactor is Mg(2+).

The protein localises to the cell inner membrane. It catalyses the reaction Ca(2+)(in) + ATP + H2O = Ca(2+)(out) + ADP + phosphate + H(+). Its activity is regulated as follows. Completely inhibited by vanadate(3-). Also inhibited by lanthanoid atom and phosphate. Not inhibited by N-ethylmaleimide, 1,3-dicyclohexylcarbodiimide, oligomycin, ouabain, valinomycin, nigericin, thapsigargin, cyclopiazonic acid or fluorescein isothiocyanate. In terms of biological role, catalyzes the hydrolysis of ATP coupled with the transport of calcium. Has some hydrolysis activity also with dATP, GTP, UTP, ITP and 4-nitrophenyl phosphate as substrate. No activity with ADP, CTP, acetyl dihydrogen phosphate or AMP-PNP as substrate. In Myroides odoratus (Flavobacterium odoratum), this protein is Calcium-transporting ATPase.